The chain runs to 306 residues: D-alanine--D-alanine ligase (306 aa).

Positions 101–301 constitute an ATP-grasp domain; it reads KKILAHAGLP…FPDLVEHLVR (201 aa). 129-185 lines the ATP pocket; that stretch reads VAELGLPVVVKAPTQGSSIGVYIVEREEDLEARITDAVAYGGTRVLVEKFIAGPELT. Positions 256, 268, and 270 each coordinate Mg(2+).

The protein belongs to the D-alanine--D-alanine ligase family. The cofactor is Mg(2+). It depends on Mn(2+) as a cofactor.

The protein resides in the cytoplasm. The enzyme catalyses 2 D-alanine + ATP = D-alanyl-D-alanine + ADP + phosphate + H(+). Its pathway is cell wall biogenesis; peptidoglycan biosynthesis. Its function is as follows. Cell wall formation. This chain is D-alanine--D-alanine ligase, found in Desulforudis audaxviator (strain MP104C).